Here is a 525-residue protein sequence, read N- to C-terminus: uncharacterized protein (525 aa).

2 stretches are compositionally biased toward polar residues: residues 139–149 and 336–349; these read LNSTPDKTQAG and SGKT…HTTS. 2 disordered regions span residues 139-158 and 330-356; these read LNST…HQAP and PAPA…PYAT.

This is an uncharacterized protein from Treponema pallidum (strain Nichols).